Reading from the N-terminus, the 276-residue chain is Molybdenum storage protein subunit alpha (276 aa).

In terms of assembly, octamer consisting of 4 alpha and 4 beta chains.

The protein localises to the cytoplasm. Functionally, intracellular storage of molybdenum. Binds polyoxomolybdates. Can bind at least 90 molybdenum atoms per protein molecule. The sequence is that of Molybdenum storage protein subunit alpha from Azotobacter vinelandii (strain DJ / ATCC BAA-1303).